Reading from the N-terminus, the 183-residue chain is Nodulation protein L (183 aa).

Belongs to the transferase hexapeptide repeat family.

Acetyltransferase implicated in the O-acetylation of Nod factors. In Rhizobium meliloti (strain 1021) (Ensifer meliloti), this protein is Nodulation protein L (nodL).